The chain runs to 81 residues: Small cysteine-rich protein 6 (81 aa).

Residues 1 to 23 (MDTKVACLLLIILGALTVQGAVS) form the signal peptide. Positions 24 to 25 (GN) are excised as a propeptide.

This sequence belongs to the Cnidaria small cysteine-rich protein (SCRiP) family. beta subfamily. Contains 4 disulfide bonds.

The protein resides in the secreted. Its subcellular location is the nematocyst. In terms of biological role, induces neurotoxic symptoms on zebrafish. Has also been claimed to be implied in calcification, but tests on homolog proteins suggest that proteins of this family have a neurotoxic function and not a calcification function. The chain is Small cysteine-rich protein 6 from Orbicella faveolata (Mountainous star coral).